Reading from the N-terminus, the 383-residue chain is MKENELKNEKSVDVLSFKQLESQKIVLPQDLFRSSFTWFCYEIYKSLAFPIWMLLWLPLSVWWKLSNNCIYPLIVSLLVLFLGPIFVLVICGLSRKRSLSKQLIQFCKEVTENTPSSDPHDWEVVAANLNSYLYENKAWNTRYFFFNAMGCQEAFRTTLLEPFSLKKDEAAKVKSFKDSVPYIEEALGVYFREVEKQWKLFNTEKSWSPVGLEDVQLPKDIHRSKLTWFLKRIFTIYSLPLWLAFLNCICVSQHFCLAFRILCPGLFFLMMVWLFQNMRTTALLVKMEHKMQFLLTIINEQESGANGWDEIARKMNRYLFEKKAWKNEEFFFEGIDCEWFFSHFFYRLLSAKKSMWLLPLNVELWPYIKEAQLSRNEESLMKK.

Residues 1–42 (MKENELKNEKSVDVLSFKQLESQKIVLPQDLFRSSFTWFCYE) lie on the Cytoplasmic side of the membrane. The helical transmembrane segment at 43-63 (IYKSLAFPIWMLLWLPLSVWW) threads the bilayer. Topologically, residues 64 to 72 (KLSNNCIYP) are extracellular. Residues 73-93 (LIVSLLVLFLGPIFVLVICGL) traverse the membrane as a helical segment. The Cytoplasmic portion of the chain corresponds to 94–232 (SRKRSLSKQL…RSKLTWFLKR (139 aa)). Residues 233–253 (IFTIYSLPLWLAFLNCICVSQ) form a helical membrane-spanning segment. Residue His254 is a topological domain, extracellular. A helical transmembrane segment spans residues 255-275 (FCLAFRILCPGLFFLMMVWLF). Topologically, residues 276-383 (QNMRTTALLV…SRNEESLMKK (108 aa)) are cytoplasmic.

Belongs to the DUP/COS family.

The protein resides in the membrane. This Saccharomyces cerevisiae (strain ATCC 204508 / S288c) (Baker's yeast) protein is Protein COS5 (COS5).